We begin with the raw amino-acid sequence, 253 residues long: 3-isopropylmalate dehydratase small subunit 3 (253 aa).

The transit peptide at 1–56 (MATSQQFLNPTLFKSLASSNKNSCTLCPSPFLQLKSASTIFNYKPLTSSSATIITR) directs the protein to the chloroplast.

It belongs to the LeuD family. In terms of assembly, heterodimer of the large LEUC/IIL1 subunit and the small LEUD (SSU1, SSU2 or SSU3) subunits. Expressed in vascular bundles of roots, cotyledons and rosette leaves. Expressed in stem vascular bundles which branche off into lateral inflorescences. Expressed in connective tissues in anthers. In hypocotyls, expressed in parenchyma cells surrounding the vasculature. In rosette leaves, expressed in phloem cells and cells close to the xylem along the vascular bundles. In roots of adult plants, expressed in cells closely associated with the stele. In flowering stalks, expressed in parenchyma cells associated with the phloem or the xylem.

It is found in the plastid. The protein localises to the chloroplast stroma. The catalysed reaction is (2R,3S)-3-isopropylmalate = (2S)-2-isopropylmalate. The enzyme catalyses a 2-(omega-methylsulfanyl)alkylmalate = a 2-(omega-methylsulfanyl)alkylmaleate + H2O. It carries out the reaction 2-(3-methylsulfanyl)propylmalate = 2-(2-methylsulfanyl)propylmaleate + H2O. It catalyses the reaction a 3-(omega-methylsulfanyl)alkylmalate = a 2-(omega-methylsulfanyl)alkylmaleate + H2O. The catalysed reaction is 2-(2-methylsulfanyl)ethylmalate = 2-(2-methylsulfanyl)ethylmaleate + H2O. The enzyme catalyses 3-(2-methylsulfanyl)ethylmalate = 2-(2-methylsulfanyl)ethylmaleate + H2O. It carries out the reaction 3-(3-methylsulfanyl)propylmalate = 2-(2-methylsulfanyl)propylmaleate + H2O. Its pathway is amino-acid biosynthesis; L-leucine biosynthesis; L-leucine from 3-methyl-2-oxobutanoate: step 2/4. Its function is as follows. Catalyzes the isomerization between 2-isopropylmalate and 3-isopropylmalate, via the formation of 2-isopropylmaleate. Functions redundantly with LEUD1 in the methionine chain elongation pathway of aliphatic glucosinolate formation. The polypeptide is 3-isopropylmalate dehydratase small subunit 3 (Arabidopsis thaliana (Mouse-ear cress)).